A 537-amino-acid polypeptide reads, in one-letter code: Putative cysteine ligase BshC (537 aa).

The stretch at 422–450 (IEKVEGMIEQQRRLNQDLLDEVAGNQNNI) forms a coiled coil.

Belongs to the BshC family.

In terms of biological role, involved in bacillithiol (BSH) biosynthesis. May catalyze the last step of the pathway, the addition of cysteine to glucosamine malate (GlcN-Mal) to generate BSH. This Staphylococcus aureus (strain bovine RF122 / ET3-1) protein is Putative cysteine ligase BshC.